The following is a 426-amino-acid chain: Glutamate-1-semialdehyde 2,1-aminomutase (426 aa).

Position 268 is an N6-(pyridoxal phosphate)lysine (K268).

It belongs to the class-III pyridoxal-phosphate-dependent aminotransferase family. HemL subfamily. Pyridoxal 5'-phosphate serves as cofactor.

The protein resides in the cytoplasm. It catalyses the reaction (S)-4-amino-5-oxopentanoate = 5-aminolevulinate. The protein operates within porphyrin-containing compound metabolism; protoporphyrin-IX biosynthesis; 5-aminolevulinate from L-glutamyl-tRNA(Glu): step 2/2. This chain is Glutamate-1-semialdehyde 2,1-aminomutase, found in Saccharolobus islandicus (strain M.16.27) (Sulfolobus islandicus).